Here is a 916-residue protein sequence, read N- to C-terminus: Protein translocase subunit SecA (916 aa).

Residues glutamine 87, 105 to 109, and aspartate 507 contribute to the ATP site; that span reads GEGKT. Residues cysteine 900, cysteine 902, cysteine 911, and histidine 912 each contribute to the Zn(2+) site.

This sequence belongs to the SecA family. In terms of assembly, monomer and homodimer. Part of the essential Sec protein translocation apparatus which comprises SecA, SecYEG and auxiliary proteins SecDF-YajC and YidC. The cofactor is Zn(2+).

The protein resides in the cell inner membrane. Its subcellular location is the cytoplasm. The enzyme catalyses ATP + H2O + cellular proteinSide 1 = ADP + phosphate + cellular proteinSide 2.. Its function is as follows. Part of the Sec protein translocase complex. Interacts with the SecYEG preprotein conducting channel. Has a central role in coupling the hydrolysis of ATP to the transfer of proteins into and across the cell membrane, serving both as a receptor for the preprotein-SecB complex and as an ATP-driven molecular motor driving the stepwise translocation of polypeptide chains across the membrane. This Neisseria gonorrhoeae (strain NCCP11945) protein is Protein translocase subunit SecA.